The chain runs to 114 residues: Protachykinin (114 aa).

The N-terminal stretch at 1–19 (MKFLLPSIVIFLVLCQVFG) is a signal peptide. The propeptide occupies 20-55 (EELGPKEDLDYWTGSNQVQDEWLQADPFREIIRRMT). A methionine amide mark is found at M67 and M91.

Belongs to the tachykinin family. As to expression, expressed in all parts of the brain, with robust expression in the olfactory bulbs and tracts, moderate expression in the hypothalamus and posterior brain, and weak expression in the telencephalon-preoptic region and optic tectum-thalamus. Also expressed in nerve fibers, intestine, testes and pituitary gland. Not expressed in the liver or kidneys.

It localises to the secreted. Tachykinins are active peptides which excite neurons, evoke behavioral responses, are potent vasodilators and secretagogues, and contract (directly or indirectly) many smooth muscles. In terms of biological role, substance P produces a voltage-dependent inhibition of calcium current in retinal bipolar cells. It can enhance learning and memory, may regulate social approach and feeding behaviors, and can accelerate the functional recovery in postural balance in response to light after unilateral labyrinthectomy. This chain is Protachykinin, found in Carassius auratus (Goldfish).